Reading from the N-terminus, the 149-residue chain is uncharacterized protein (149 aa).

This is an uncharacterized protein from Aquifex aeolicus (strain VF5).